The following is a 196-amino-acid chain: dTTP/UTP pyrophosphatase (196 aa).

Residue Asp-72 is the Proton acceptor of the active site.

This sequence belongs to the Maf family. YhdE subfamily. The cofactor is a divalent metal cation.

The protein resides in the cytoplasm. It carries out the reaction dTTP + H2O = dTMP + diphosphate + H(+). The catalysed reaction is UTP + H2O = UMP + diphosphate + H(+). In terms of biological role, nucleoside triphosphate pyrophosphatase that hydrolyzes dTTP and UTP. May have a dual role in cell division arrest and in preventing the incorporation of modified nucleotides into cellular nucleic acids. This Chlamydia trachomatis serovar A (strain ATCC VR-571B / DSM 19440 / HAR-13) protein is dTTP/UTP pyrophosphatase.